A 135-amino-acid chain; its full sequence is Small ribosomal subunit protein bS16m/bS16c (135 aa).

A chloroplast and mitochondrion-targeting transit peptide spans M1–L7. The interval P87–A135 is disordered. Basic and acidic residues predominate over residues Q124–A135.

It belongs to the bacterial ribosomal protein bS16 family. As to quaternary structure, component of the mitochondrial ribosome small subunit. Expressed at low levels in flowers, and, to a lower extent, in leaves, stems and roots.

The protein resides in the mitochondrion. It is found in the plastid. The protein localises to the chloroplast. In Arabidopsis thaliana (Mouse-ear cress), this protein is Small ribosomal subunit protein bS16m/bS16c.